A 172-amino-acid chain; its full sequence is Single-stranded DNA-binding protein A (172 aa).

The 104-residue stretch at 1 to 104 (MLNRVVLVGR…VQAESVQFLE (104 aa)) folds into the SSB domain. Tyrosine 82 is subject to Phosphotyrosine. Residues 103–172 (LEPKNGGGSG…IDISDDDLPF (70 aa)) form a disordered region. A compositionally biased stretch (gly residues) spans 107-131 (NGGGSGSGGYNEGNSGGGQYFGGGQ). Low complexity predominate over residues 132–149 (NDNPFGGNQNNQRRNQGN). The short motif at 167-172 (DDDLPF) is the Important for interaction with partner proteins element.

In terms of assembly, homotetramer. Interacts with proteins involved in DNA metabolism such as PriA, RecQ, RecG, RecS, DnaE, RarA, RecJ, RecO, SbcC, RecD2 (formerly YrrC), XseA and Ung. Interacts with RecQ via its 10 C-terminal residues. Interacts with RecD2. Phosphorylated by YwqD, which increases ssDNA affinity; dephosphorylated by YwqE.

The protein localises to the cytoplasm. It localises to the nucleoid. Plays an important role in DNA replication, recombination and repair. Binds to single-stranded (ss)DNA and to an array of partner proteins to recruit them to their sites of action during DNA metabolism. Associates with oriC, this requires DnaA. SsbA binding to ssDNA prevents DnaB and DnaD individually from binding to DNA. Has a 20-fold higher affinity for ssDNA than SsbB; SsbA and DprA activate the homologous DNA strand exchange function of RecA-ATP. Enhances the activity of 3'-5' DNA helicase RecQ. The chain is Single-stranded DNA-binding protein A (ssbA) from Bacillus subtilis (strain 168).